The sequence spans 310 residues: Ornithine carbamoyltransferase (310 aa).

Residues Ser-57–Thr-60, Gln-84, Arg-108, and His-135–Gln-138 each bind carbamoyl phosphate. Residues Asn-166, Asp-229, and Ser-233–Met-234 each bind L-ornithine. Carbamoyl phosphate-binding positions include Cys-269–Leu-270 and Arg-297.

The protein belongs to the aspartate/ornithine carbamoyltransferase superfamily. OTCase family.

It is found in the cytoplasm. It carries out the reaction carbamoyl phosphate + L-ornithine = L-citrulline + phosphate + H(+). It functions in the pathway amino-acid biosynthesis; L-arginine biosynthesis; L-arginine from L-ornithine and carbamoyl phosphate: step 1/3. Reversibly catalyzes the transfer of the carbamoyl group from carbamoyl phosphate (CP) to the N(epsilon) atom of ornithine (ORN) to produce L-citrulline. The sequence is that of Ornithine carbamoyltransferase from Thermosynechococcus vestitus (strain NIES-2133 / IAM M-273 / BP-1).